The chain runs to 406 residues: Odorant receptor 42a (406 aa).

The Cytoplasmic segment spans residues methionine 1–phenylalanine 44. A helical membrane pass occupies residues phenylalanine 45 to isoleucine 65. Residues glycine 66–serine 86 are Extracellular-facing. A helical transmembrane segment spans residues leucine 87 to valine 107. The Cytoplasmic portion of the chain corresponds to lysine 108–arginine 142. A helical transmembrane segment spans residues isoleucine 143–isoleucine 163. Residues phenylalanine 164–serine 181 are Extracellular-facing. A helical membrane pass occupies residues serine 182–phenylalanine 202. The Cytoplasmic portion of the chain corresponds to glutamine 203–threonine 271. The chain crosses the membrane as a helical span at residues isoleucine 272–leucine 292. The Extracellular segment spans residues phenylalanine 293–serine 298. Residues alanine 299–leucine 319 traverse the membrane as a helical segment. Residues cysteine 320 to glutamine 359 are Cytoplasmic-facing. The chain crosses the membrane as a helical span at residues proline 360–threonine 380. Residues lysine 381–glutamate 406 lie on the Extracellular side of the membrane. Asparagine 394 is a glycosylation site (N-linked (GlcNAc...) asparagine).

It belongs to the insect chemoreceptor superfamily. Heteromeric odorant receptor channel (TC 1.A.69) family. Or2a subfamily. Interacts with Orco. Complexes exist early in the endomembrane system in olfactory sensory neurons (OSNs), coupling these complexes to the conserved ciliary trafficking pathway.

It is found in the cell membrane. Functionally, odorant receptor which mediates acceptance or avoidance behavior, depending on its substrates. The odorant receptor repertoire encodes a large collection of odor stimuli that vary widely in identity, intensity, and duration. May form a complex with Orco to form odorant-sensing units, providing sensitive and prolonged odorant signaling and calcium permeability. Involved in the behavioral responses to butanol, ethyl acetate, propyl acetate, and pentyl acetate. Also responds to pyrazines. The protein is Odorant receptor 42a (Or42a) of Drosophila melanogaster (Fruit fly).